The sequence spans 193 residues: Ion-translocating oxidoreductase complex subunit A (193 aa).

6 helical membrane passes run 5–25 (LMLLLGTALVNNVVLVKFLGL), 39–59 (IGMGMATTFVLTLASALTWLI), 62–82 (FLLVPFDFGYLRILSFILVIA), 102–122 (VLGIYLPLITTNCAVLGVALL), 134–154 (VLYGFGSALGFTMVMVLFAGL), and 170–190 (APISFITAGLLSLAFMGFAGL).

This sequence belongs to the NqrDE/RnfAE family. As to quaternary structure, the complex is composed of six subunits: RnfA, RnfB, RnfC, RnfD, RnfE and RnfG.

The protein resides in the cell inner membrane. Its function is as follows. Part of a membrane-bound complex that couples electron transfer with translocation of ions across the membrane. The polypeptide is Ion-translocating oxidoreductase complex subunit A (Azoarcus sp. (strain BH72)).